A 38-amino-acid chain; its full sequence is Photosystem II reaction center protein L (38 aa).

Residues 17–37 (SLYWGLLLMFVLAVLFSSYFF) traverse the membrane as a helical segment.

It belongs to the PsbL family. As to quaternary structure, PSII is composed of 1 copy each of membrane proteins PsbA, PsbB, PsbC, PsbD, PsbE, PsbF, PsbH, PsbI, PsbJ, PsbK, PsbL, PsbM, PsbT, PsbX, PsbY, PsbZ, Psb30/Ycf12, at least 3 peripheral proteins of the oxygen-evolving complex and a large number of cofactors. It forms dimeric complexes.

It localises to the plastid. The protein resides in the chloroplast thylakoid membrane. In terms of biological role, one of the components of the core complex of photosystem II (PSII). PSII is a light-driven water:plastoquinone oxidoreductase that uses light energy to abstract electrons from H(2)O, generating O(2) and a proton gradient subsequently used for ATP formation. It consists of a core antenna complex that captures photons, and an electron transfer chain that converts photonic excitation into a charge separation. This subunit is found at the monomer-monomer interface and is required for correct PSII assembly and/or dimerization. This Emiliania huxleyi (Coccolithophore) protein is Photosystem II reaction center protein L.